A 319-amino-acid polypeptide reads, in one-letter code: Probable NAD(P)H-dependent D-xylose reductase xyl1 (319 aa).

N26 carries N-linked (GlcNAc...) asparagine glycosylation. Catalysis depends on Y50, which acts as the Proton donor. H112 contacts substrate. N141 and N167 each carry an N-linked (GlcNAc...) asparagine glycan. NAD(+) contacts are provided by residues 166–167 (SN), 215–224 (SSFGPLSFLE), and 271–281 (KSNNPQRLKQN).

This sequence belongs to the aldo/keto reductase family.

It catalyses the reaction xylitol + NAD(+) = D-xylose + NADH + H(+). It carries out the reaction xylitol + NADP(+) = D-xylose + NADPH + H(+). The protein operates within carbohydrate metabolism; D-xylose degradation. Catalyzes the initial reaction in the xylose utilization pathway by reducing D-xylose into xylitol. Xylose is a major component of hemicelluloses such as xylan. Most fungi utilize D-xylose via three enzymatic reactions, xylose reductase (XR), xylitol dehydrogenase (XDH), and xylulokinase, to form xylulose 5-phosphate, which enters pentose phosphate pathway. In Aspergillus niger (strain ATCC MYA-4892 / CBS 513.88 / FGSC A1513), this protein is Probable NAD(P)H-dependent D-xylose reductase xyl1 (xyl1).